We begin with the raw amino-acid sequence, 911 residues long: Disks large homolog 1 (911 aa).

Positions 4–64 constitute an L27 domain; it reads RKQDTQRALH…FYEVTLLDNP (61 aa). S39 carries the post-translational modification Phosphoserine; by CaMK2. The interval 70-105 is disordered; the sequence is SKQCEPVQPGNPWESGSLSSAAVTSESLPGGLSPPV. The span at 83–96 shows a compositional bias: polar residues; sequence ESGSLSSAAVTSES. A phosphoserine mark is found at S122, S138, and S158. Residues 162-212 form an interaction with SH3 domains region; that stretch reads PTEAVPPSSPIVPVTPALPVPAESPVVLPSTPQANPPPVLVNTDSLETPTY. PDZ domains follow at residues 224–310 and 318–404; these read EITL…VKRR and EIKL…AAKP. The required for interaction with MARCHF2 stretch occupies residues 224–545; that stretch reads EITLERGNSG…QAVTIVAQYR (322 aa). At S232 the chain carries Phosphoserine; by CaMK2. At Y398 the chain carries Phosphotyrosine. Residues 419–441 are compositionally biased toward polar residues; it reads TNSSSQSVDNHVSPSSYLGQTPA. Positions 419 to 443 are disordered; it reads TNSSSQSVDNHVSPSSYLGQTPASP. In terms of domain architecture, PDZ 3 spans 465-545; the sequence is KVVLHRGSTG…QAVTIVAQYR (81 aa). 9 positions are modified to phosphoserine: S567, S572, S574, S578, S597, S618, S684, S687, and S841. Residues 580–650 enclose the SH3 domain; it reads KRSLYVRALF…PSKRRVEKKE (71 aa). The tract at residues 662-696 is disordered; it reads KTRGDKGEIPDDMGSKGLKHVTSNASDSESSYHEY. The Guanylate kinase-like domain occupies 721 to 896; that stretch reads TRPVIILGPM…IYNQVKQIIE (176 aa).

This sequence belongs to the MAGUK family. In terms of assembly, homotetramer. Interacts (via guanylate kinase-like domain) with DLGAP1, DLGAP2, DLGAP3, DLGAP4 and MAP1A. Interacts (via guanylate kinase-like domain) with KIF13B. May interact with HTR2A. Interacts (via PDZ domains) with GRIA1. Interacts (via PDZ domains) with GRIN2A. Interacts (via PDZ domains) with KCND2 and KCND3. Interacts (via PDZ domains) with KCNA1, KCNA2, KCNA3 and KCNA4. Interacts (via PDZ domains) with ADGRA3. Interacts with KCNF1. Interacts with CAMK2. Interacts with cytoskeleton-associated protein EPB41. Interacts with cytoskeleton-associated protein EZR. Found in a complex with KCNA5 and CAV3. Found in a complex with APC and CTNNB1. Interacts (via PDZ domains) with APC. Interacts with CDH1 through binding to PIK3R1. Forms multiprotein complexes with CASK, LIN7A, LIN7B, LIN7C, APBA1, and KCNJ12. Interacts with TOPK. Forms a tripartite complex composed of DLG1, MPP7 and LIN7 (LIN7A or LIN7C). May interact with TJAP1. Interacts with PTEN. Interacts with FRMPD4 (via C-terminus). Interacts with LRFN1 and LRFN2. Interacts with LRFN4 and SFPQ. Interacts (via PDZ domains) with ADGRA2 (via PDZ-binding motif). Interacts with ADAM10; this interaction recruits ADAM10 to the cell membrane during long-term depression in hippocampal neurons. Interacts with DGKI (via PDZ-binding motif). Interacts (via PDZ domains) with MARCHF2 (via PDZ domain); the interaction leads to DLG1 ubiqtuitination and degradation. Interacts (via N-terminus) with MPP3; this interaction connects CADM1 with DLG1 and links CADM1 with the regulatory subunit of phosphoinositide-3-kinase (PI3K) by forming a multiprotein complex and participates in cell spreading. In terms of processing, phosphorylated by MAPK12. Phosphorylation of Ser-39 modulates transport to the plasma membrane. Phosphorylation of Ser-232 regulates association with GRIN2A. Ubiquitinated; by MARCHF2 which results in its degradation. Widely expressed. Strongly expressed in epithelial cells, in the small intestine it is only detected in the vili. Expressed in brain, heart (at protein level), muscle, lung and liver. In the brain it was detected in olfactory bulbs, cerebral cortex, hippocampus, and spinal cord (at protein level).

It is found in the cell membrane. It localises to the basolateral cell membrane. Its subcellular location is the endoplasmic reticulum membrane. The protein localises to the postsynaptic density. The protein resides in the synapse. It is found in the sarcolemma. It localises to the cell junction. Its subcellular location is the cytoplasm. The protein localises to the apical cell membrane. In terms of biological role, essential multidomain scaffolding protein required for normal development. Recruits channels, receptors and signaling molecules to discrete plasma membrane domains in polarized cells. Promotes epithelial cell layer barrier function via maintaining cell-cell adhesion. May play a role in adherens junction assembly, signal transduction, cell proliferation, synaptogenesis and lymphocyte activation. Regulates the excitability of cardiac myocytes by modulating the functional expression of Kv4 channels. Functional regulator of Kv1.5 channel. During long-term depression in hippocampal neurons, it recruits ADAM10 to the plasma membrane. The chain is Disks large homolog 1 from Rattus norvegicus (Rat).